Consider the following 464-residue polypeptide: Glutamate--tRNA ligase 1 (464 aa).

Positions 8–18 match the 'HIGH' region motif; sequence PSPTGHLHVGG. The 'KMSKS' region signature appears at 231–235; sequence PLSKR. Position 234 (K234) interacts with ATP.

The protein belongs to the class-I aminoacyl-tRNA synthetase family. Glutamate--tRNA ligase type 1 subfamily. Monomer.

The protein localises to the cytoplasm. The enzyme catalyses tRNA(Glu) + L-glutamate + ATP = L-glutamyl-tRNA(Glu) + AMP + diphosphate. Functionally, catalyzes the attachment of glutamate to tRNA(Glu) in a two-step reaction: glutamate is first activated by ATP to form Glu-AMP and then transferred to the acceptor end of tRNA(Glu). The polypeptide is Glutamate--tRNA ligase 1 (Thermotoga petrophila (strain ATCC BAA-488 / DSM 13995 / JCM 10881 / RKU-1)).